A 432-amino-acid chain; its full sequence is uncharacterized protein (432 aa).

This sequence to M.jannaschii MJ0977.

This is an uncharacterized protein from Methanocaldococcus jannaschii (strain ATCC 43067 / DSM 2661 / JAL-1 / JCM 10045 / NBRC 100440) (Methanococcus jannaschii).